We begin with the raw amino-acid sequence, 596 residues long: V-type ATP synthase alpha chain (596 aa).

Position 233–240 (233–240 (GPFGAGKT)) interacts with ATP.

It belongs to the ATPase alpha/beta chains family.

The enzyme catalyses ATP + H2O + 4 H(+)(in) = ADP + phosphate + 5 H(+)(out). Its function is as follows. Produces ATP from ADP in the presence of a proton gradient across the membrane. The V-type alpha chain is a catalytic subunit. This chain is V-type ATP synthase alpha chain, found in Streptococcus sanguinis (strain SK36).